The sequence spans 335 residues: COP9 signalosome complex subunit 5 (335 aa).

The MPN domain maps to 51–187 (VRISAVALLK…IGAFRTFPKD (137 aa)). Zn(2+) is bound by residues H134, H136, and D147. The JAMM motif motif lies at 134 to 147 (HSHPGYGCWLSGID).

Belongs to the peptidase M67A family. CSN5 subfamily. Component of the COP9 signalosome (CSN) complex.

The protein resides in the cytoplasm. The protein localises to the nucleus. Catalytic component of the COP9 signalosome (CSN) complex that acts as an regulator of the ubiquitin (Ubl) conjugation pathway by mediating the deneddylation of the cullin subunit of SCF-type E3 ubiquitin-protein ligase complexes. The CSN complex seems to link protein degradation to sexual development. Required for fruit body formation. This Emericella nidulans (strain FGSC A4 / ATCC 38163 / CBS 112.46 / NRRL 194 / M139) (Aspergillus nidulans) protein is COP9 signalosome complex subunit 5 (rri1).